The primary structure comprises 353 residues: Glucose import ATP-binding protein GlcV (353 aa).

The 238-residue stretch at 4–241 (IIVKNVSKVF…PVSIQVASLI (238 aa)) folds into the ABC transporter domain. ATP-binding positions include 40 to 46 (SGAGKTT), Q89, and E166.

The protein belongs to the ABC transporter superfamily. In terms of assembly, the complex is composed of two ATP-binding proteins (GlcV), two transmembrane proteins (GlcT and GlcU) and a solute-binding protein (GlcS). Forms transient head-to-tail homodimers in the presence of ATP-Mg(2+).

It is found in the cell membrane. The enzyme catalyses D-glucose(out) + ATP + H2O = D-glucose(in) + ADP + phosphate + H(+). Part of the ABC transporter complex GlcSTUV involved in glucose uptake. Responsible for energy coupling to the transport system. In vitro, as a free subunit, exhibits a constitutive ATPase activity. The chain is Glucose import ATP-binding protein GlcV from Saccharolobus solfataricus (strain ATCC 35092 / DSM 1617 / JCM 11322 / P2) (Sulfolobus solfataricus).